We begin with the raw amino-acid sequence, 114 residues long: UPF0339 protein plu2779 (114 aa).

2 consecutive repeat copies span residues 11–59 (TKNK…NFEI) and 62–110 (NKSG…VRDL).

Belongs to the UPF0339 family. Duplicated subfamily.

The polypeptide is UPF0339 protein plu2779 (Photorhabdus laumondii subsp. laumondii (strain DSM 15139 / CIP 105565 / TT01) (Photorhabdus luminescens subsp. laumondii)).